The sequence spans 187 residues: MMSTSDAPLDPVEFIHSRIRTVPDWPQPGVMFRDITPLLQSAKALRVLVDLFVERYVDAKLDYIAGLDARGFIIAPIVAYELSVGFVPIRKVGKLPYATQRESYALEYGTATVEIHEDACKPGDRVVIVDDLIATGGTMMAGKNLLERLGAVVVEGAAIVDLPDLGGSALLRGAGLPLYTVTEFPGH.

The protein belongs to the purine/pyrimidine phosphoribosyltransferase family. Homodimer.

It is found in the cytoplasm. It carries out the reaction AMP + diphosphate = 5-phospho-alpha-D-ribose 1-diphosphate + adenine. It functions in the pathway purine metabolism; AMP biosynthesis via salvage pathway; AMP from adenine: step 1/1. Its function is as follows. Catalyzes a salvage reaction resulting in the formation of AMP, that is energically less costly than de novo synthesis. The protein is Adenine phosphoribosyltransferase of Burkholderia pseudomallei (strain 1106a).